We begin with the raw amino-acid sequence, 318 residues long: MAAAAAAAAEQQSSNGPVKKSMREKAVERRNVNKEHNSNFKAGYIPIDEDRLHKTGLRGRKGNLAICVIVLLFLLAVINLIITLVIWAVIRIGPNGCDSMEFHESGLLRFKQVSDMGVIHPLYKSTVGGRRNENLVITGNNQPIVFQQGTTKLSVEKNKTSITSDIGMQFFDPRTQNILFSTDYETHEFHLPSGVKSLNVQKASTERITSNATSDLNIKVDGRAIVRGNEGVFIMGKTIEFHMGGNMELKAENSIILNGTVMVSTTRLPSSSSADQLGGGDWVRYKLCMCADGTLFKVQVTGQNVGCQVSDNPCGNTH.

The interval 1-32 (MAAAAAAAAEQQSSNGPVKKSMREKAVERRNV) is disordered. Over 1–65 (MAAAAAAAAE…GLRGRKGNLA (65 aa)) the chain is Cytoplasmic. Positions 21–32 (SMREKAVERRNV) are enriched in basic and acidic residues. Residues 66–86 (ICVIVLLFLLAVINLIITLVI) form a helical; Signal-anchor for type II membrane protein membrane-spanning segment. The Extracellular portion of the chain corresponds to 87–318 (WAVIRIGPNG…VSDNPCGNTH (232 aa)). N-linked (GlcNAc...) asparagine glycans are attached at residues asparagine 158, asparagine 211, and asparagine 258. 2 disulfides stabilise this stretch: cysteine 288-cysteine 314 and cysteine 290-cysteine 307.

Belongs to the sarcoglycan beta/delta/gamma/zeta family. Cross-link to form 2 major subcomplexes: one consisting of SGCB, SGCD and SGCG and the other consisting of SGCB and SGCD. The association between SGCB and SGCG is particularly strong while SGCA is loosely associated with the other sarcoglycans. In terms of processing, disulfide bonds are present.

The protein localises to the cell membrane. The protein resides in the sarcolemma. Its subcellular location is the cytoplasm. It localises to the cytoskeleton. Its function is as follows. Component of the sarcoglycan complex, a subcomplex of the dystrophin-glycoprotein complex which forms a link between the F-actin cytoskeleton and the extracellular matrix. The sequence is that of Beta-sarcoglycan (SGCB) from Oryctolagus cuniculus (Rabbit).